A 446-amino-acid polypeptide reads, in one-letter code: ATP-dependent RNA helicase SUB2 (446 aa).

The residue at position 2 (Ser-2) is an N-acetylserine. Phosphoserine is present on residues Ser-13 and Ser-37. Positions 23-41 (ASKAAEAGETGAATSATEG) are enriched in low complexity. Positions 23-52 (ASKAAEAGETGAATSATEGDNNNNTAAGDK) are disordered. The Q motif motif lies at 62–90 (TGFKDFLLKPELSRAIIDCGFEHPSEVQQ). The Helicase ATP-binding domain maps to 93-268 (IPQSIHGTDV…RRFLQNPLEI (176 aa)). 106–113 (AKSGLGKT) lines the ATP pocket. Thr-169 carries the phosphothreonine modification. Positions 215–218 (DECD) match the DECD box motif. The Helicase C-terminal domain maps to 280–441 (GLQQYYIKLE…EFPEEGIDPS (162 aa)).

The protein belongs to the DEAD box helicase family. DECD subfamily. As to quaternary structure, component of the TREX complex composed of at least SUB2, TEX1, YRA1 and the four THO complex components: HPR1, MFT1, THO2 and THP1. Interacts with HPR1, YRA1, and YRA2. SUB2 may mediate the interaction between the THO complex and YRA1. Associates with growing mRNP complexes during transcription. This association requires the presence of HPR1. Also interacts with SAC3. Interacts with THO1 in the presence of RNA; this interaction facilitates RNA binding of SUB2.

The protein resides in the nucleus. It carries out the reaction ATP + H2O = ADP + phosphate + H(+). ATP-binding RNA helicase component of the TREX complex involved in transcription elongation and required for the export of mRNA out of the nucleus. SUB2 also plays a role in pre-mRNA splicing and spliceosome assembly. May be involved in rDNA and telomeric silencing, and maintenance of genome integrity. Associates with THO1, which facilitates RNA binding of SUB2 and likely plays a role in mRNA export. The protein is ATP-dependent RNA helicase SUB2 (SUB2) of Saccharomyces cerevisiae (strain ATCC 204508 / S288c) (Baker's yeast).